A 576-amino-acid chain; its full sequence is Apolipoprotein N-acyltransferase 1 (576 aa).

The next 7 membrane-spanning stretches (helical) occupy residues 15-35, 38-58, 60-80, 92-112, 128-148, 168-188, and 204-224; these read LILC…FSFF, GVFA…TSIW, AFLW…YWIP, FVSI…FFLF, YILL…FQIF, ICGV…FLIL, and IASL…IGYI. Positions 236 to 538 constitute a CN hydrolase domain; sequence LSVLMIQPDT…TGTRAFSIRL (303 aa). E285 serves as the catalytic Proton acceptor. K355 is a catalytic residue. The Nucleophile role is filled by C446. A helical membrane pass occupies residues 549–569; sequence FGNSFLWIFCILILISRLIFV.

It belongs to the CN hydrolase family. Apolipoprotein N-acyltransferase subfamily.

It localises to the cell inner membrane. The catalysed reaction is N-terminal S-1,2-diacyl-sn-glyceryl-L-cysteinyl-[lipoprotein] + a glycerophospholipid = N-acyl-S-1,2-diacyl-sn-glyceryl-L-cysteinyl-[lipoprotein] + a 2-acyl-sn-glycero-3-phospholipid + H(+). Its pathway is protein modification; lipoprotein biosynthesis (N-acyl transfer). Its function is as follows. Catalyzes the phospholipid dependent N-acylation of the N-terminal cysteine of apolipoprotein, the last step in lipoprotein maturation. In Leptospira interrogans serogroup Icterohaemorrhagiae serovar copenhageni (strain Fiocruz L1-130), this protein is Apolipoprotein N-acyltransferase 1.